Reading from the N-terminus, the 78-residue chain is Exodeoxyribonuclease 7 small subunit (78 aa).

This sequence belongs to the XseB family. In terms of assembly, heterooligomer composed of large and small subunits.

The protein resides in the cytoplasm. The catalysed reaction is Exonucleolytic cleavage in either 5'- to 3'- or 3'- to 5'-direction to yield nucleoside 5'-phosphates.. In terms of biological role, bidirectionally degrades single-stranded DNA into large acid-insoluble oligonucleotides, which are then degraded further into small acid-soluble oligonucleotides. In Paracoccus zeaxanthinifaciens, this protein is Exodeoxyribonuclease 7 small subunit.